Reading from the N-terminus, the 299-residue chain is ATP phosphoribosyltransferase (299 aa).

The protein belongs to the ATP phosphoribosyltransferase family. Long subfamily. Mg(2+) is required as a cofactor.

Its subcellular location is the cytoplasm. The enzyme catalyses 1-(5-phospho-beta-D-ribosyl)-ATP + diphosphate = 5-phospho-alpha-D-ribose 1-diphosphate + ATP. The protein operates within amino-acid biosynthesis; L-histidine biosynthesis; L-histidine from 5-phospho-alpha-D-ribose 1-diphosphate: step 1/9. Its activity is regulated as follows. Feedback inhibited by histidine. Functionally, catalyzes the condensation of ATP and 5-phosphoribose 1-diphosphate to form N'-(5'-phosphoribosyl)-ATP (PR-ATP). Has a crucial role in the pathway because the rate of histidine biosynthesis seems to be controlled primarily by regulation of HisG enzymatic activity. This Campylobacter jejuni subsp. jejuni serotype O:23/36 (strain 81-176) protein is ATP phosphoribosyltransferase.